The following is a 222-amino-acid chain: Cytidylate kinase (222 aa).

An ATP-binding site is contributed by 10–18; it reads GPAGAGKST.

Belongs to the cytidylate kinase family. Type 1 subfamily.

It localises to the cytoplasm. The enzyme catalyses CMP + ATP = CDP + ADP. It carries out the reaction dCMP + ATP = dCDP + ADP. In Halalkalibacterium halodurans (strain ATCC BAA-125 / DSM 18197 / FERM 7344 / JCM 9153 / C-125) (Bacillus halodurans), this protein is Cytidylate kinase.